We begin with the raw amino-acid sequence, 135 residues long: MPAKTATAVKRTTTTKKSAAKRKTSKAVKKAGKRTQSKAKGAQKVKKAATRRTPSKSAGARKATKKAGARKASTKRSATKKTTAAPAAAAAPATDAPAAAATPSKATGSAKKASARKSSAKKPAKGGKKKSAKKN.

Over residues 1 to 17 (MPAKTATAVKRTTTTKK) the composition is skewed to low complexity. The tract at residues 1 to 135 (MPAKTATAVK…GGKKKSAKKN (135 aa)) is disordered. Basic residues-rich tracts occupy residues 18–54 (SAAK…RRTP) and 62–79 (KATK…RSAT). Low complexity predominate over residues 80–112 (KKTTAAPAAAAAPATDAPAAAATPSKATGSAKK). Residues 113–135 (ASARKSSAKKPAKGGKKKSAKKN) show a composition bias toward basic residues.

It localises to the nucleus. The protein resides in the chromosome. In terms of biological role, histones H1 are necessary for the condensation of nucleosome chains into higher-order structures. This is Histone H1, macronuclear from Euplotes eurystomus (Ciliate).